We begin with the raw amino-acid sequence, 380 residues long: Cytochrome b (380 aa).

The next 4 membrane-spanning stretches (helical) occupy residues 33 to 53 (FGSL…FLAM), 77 to 98 (WLIR…YLHV), 113 to 133 (WNIG…GYVL), and 178 to 198 (FFAF…LHLL). Residues histidine 83 and histidine 97 each coordinate heme b. 2 residues coordinate heme b: histidine 182 and histidine 196. Residue histidine 201 participates in a ubiquinone binding. 4 helical membrane passes run 226–246 (YKDI…ALFS), 288–308 (LGGV…PILH), 320–340 (FSQF…WIGG), and 347–367 (FIII…LLIP).

This sequence belongs to the cytochrome b family. In terms of assembly, the cytochrome bc1 complex contains 3 respiratory subunits (MT-CYB, CYC1 and UQCRFS1), 2 core proteins (UQCRC1 and UQCRC2) and probably 6 low-molecular weight proteins. It depends on heme b as a cofactor.

Its subcellular location is the mitochondrion inner membrane. Its function is as follows. Component of the ubiquinol-cytochrome c reductase complex (complex III or cytochrome b-c1 complex) that is part of the mitochondrial respiratory chain. The b-c1 complex mediates electron transfer from ubiquinol to cytochrome c. Contributes to the generation of a proton gradient across the mitochondrial membrane that is then used for ATP synthesis. The protein is Cytochrome b (mt-cyb) of Arapaima gigas (Arapaima).